Here is a 282-residue protein sequence, read N- to C-terminus: Transcription factor LBX1 (282 aa).

Residues 1–20 (MTSKEDGKAAPGEERRRSPL) are compositionally biased toward basic and acidic residues. Residues 1–36 (MTSKEDGKAAPGEERRRSPLDHLPPPANSNKPLTPF) are disordered. The segment at residues 125–184 (RRKSRTAFTNHQIYELEKRFLYQKYLSPADRDQIAQQLGLTNAQVITWFQNRRAKLKRDL) is a DNA-binding region (homeobox). The segment at 210-282 (ELEQNSEASG…EEDEEIDVDD (73 aa)) is disordered. Over residues 218 to 227 (SGGGGGGGCG) the composition is skewed to gly residues. Residues 269–282 (CSEDEEDEEIDVDD) are compositionally biased toward acidic residues.

In terms of assembly, interacts with SKOR1 which acts as a transcriptional corepressor. In terms of tissue distribution, expressed in the dorsal part of the spinal cord and hindbrain and in presumptive myogenic cells in lateral regions of differentiating somites.

Its subcellular location is the nucleus. Functionally, transcription factor required for the development of GABAergic interneurons in the dorsal horn of the spinal cord and migration and further development of hypaxial muscle precursor cells for limb muscles, diaphragm and hypoglossal cord. The sequence is that of Transcription factor LBX1 (Lbx1) from Mus musculus (Mouse).